Here is a 423-residue protein sequence, read N- to C-terminus: Mannose-6-phosphate isomerase (423 aa).

Alanine 2 is subject to N-acetylalanine. Phosphoserine occurs at positions 102 and 108. Zn(2+)-binding residues include glutamine 110, histidine 112, glutamate 137, and histidine 276. Residue arginine 295 is part of the active site.

The protein belongs to the mannose-6-phosphate isomerase type 1 family. Zn(2+) is required as a cofactor.

It is found in the cytoplasm. It carries out the reaction D-mannose 6-phosphate = D-fructose 6-phosphate. The protein operates within nucleotide-sugar biosynthesis; GDP-alpha-D-mannose biosynthesis; alpha-D-mannose 1-phosphate from D-fructose 6-phosphate: step 1/2. Functionally, isomerase that catalyzes the interconversion of fructose-6-P and mannose-6-P and has a critical role in the supply of D-mannose derivatives required for many eukaryotic glycosylation reactions. The chain is Mannose-6-phosphate isomerase (MPI) from Pan troglodytes (Chimpanzee).